A 328-amino-acid chain; its full sequence is Reticulocalbin-3 (328 aa).

The N-terminal stretch at 1 to 20 is a signal peptide; it reads MMWRPSVLLLLLLLRHGAQG. Residues 19 to 49 form a disordered region; that stretch reads QGKPSPDAGPHGQGRVHQAAPLSDAPHDDAH. EF-hand domains lie at 75–112, 113–148, 163–198, 200–235, 241–276, and 277–312; these read ESQA…TQQR, HIRD…HYAP, KMLA…EEFP, MRDI…AEPG, WVQT…PAQD, and QPLV…FVGS. Ca(2+) is bound by residues Asp-92, Asp-94, Trp-96, Glu-101, Asp-126, Asp-128, Asp-130, Arg-132, and Glu-137. A glycan (N-linked (GlcNAc...) asparagine) is linked at Asn-140. Ca(2+) contacts are provided by Asp-176, Asp-178, Asp-180, Met-182, Glu-187, Asp-213, Asn-215, Asp-217, Tyr-219, Glu-224, Asp-254, Asn-256, Asp-258, His-260, Glu-265, Asp-290, Asp-292, Asp-294, Arg-296, and Glu-301. A Prevents secretion from ER motif is present at residues 325–328; sequence HDEL.

Belongs to the CREC family. In terms of assembly, interacts with PCSK6 (immature form including the propeptide); probably involved in the maturation and the secretion of PCSK6. In terms of processing, degraded by PCSK6 and other endoproteases including FURIN and PCSK5. Post-translationally, N-glycosylated. In terms of tissue distribution, widely expressed.

The protein localises to the endoplasmic reticulum lumen. Its function is as follows. Probable molecular chaperone assisting protein biosynthesis and transport in the endoplasmic reticulum. Required for the proper biosynthesis and transport of pulmonary surfactant-associated protein A/SP-A, pulmonary surfactant-associated protein D/SP-D and the lipid transporter ABCA3. By regulating both the proper expression and the degradation through the endoplasmic reticulum-associated protein degradation pathway of these proteins plays a crucial role in pulmonary surfactant homeostasis. Has an anti-fibrotic activity by negatively regulating the secretion of type I and type III collagens. This calcium-binding protein also transiently associates with immature PCSK6 and regulates its secretion. This chain is Reticulocalbin-3, found in Homo sapiens (Human).